The chain runs to 169 residues: Phycobiliprotein beta chain (169 aa).

At Asn72 the chain carries N4-methylasparagine. Cys82 serves as a coordination point for (2R,3E)-phycocyanobilin.

Belongs to the phycobiliprotein family. In terms of assembly, heterodimer of an alpha and a beta chain. Post-translationally, contains one covalently linked bilin chromophore.

It is found in the cellular thylakoid membrane. Functionally, light-harvesting photosynthetic bile pigment-protein from the phycobiliprotein complex. This is a protein functionally equivalent to, but with weaker absorbance than, allophycocyanin beta chain. The chain is Phycobiliprotein beta chain (apcD) from Mastigocladus laminosus (Fischerella sp.).